The sequence spans 64 residues: Large ribosomal subunit protein bL35 (64 aa).

Residues 1-26 show a composition bias toward basic residues; the sequence is MPKMKSHRGASKRFKRTASGKLKRSH. The disordered stretch occupies residues 1 to 42; sequence MPKMKSHRGASKRFKRTASGKLKRSHAYTSHLFANKSTKAKR.

It belongs to the bacterial ribosomal protein bL35 family.

In Exiguobacterium sp. (strain ATCC BAA-1283 / AT1b), this protein is Large ribosomal subunit protein bL35.